Here is a 527-residue protein sequence, read N- to C-terminus: Sulfate adenylyltransferase (527 aa).

The interval 1–176 (MPIPTPHGGK…LQGINYPKHY (176 aa)) is N-terminal. The segment at 177 to 406 (DYVDARKTPT…LRETNPPRSK (230 aa)) is catalytic. Gln-206 provides a ligand contact to sulfate. ATP is bound by residues 206–209 (QTRN) and 302–305 (GRDH). Active-site residues include Thr-207, Arg-208, and Asn-209. Position 208 (Arg-208) interacts with sulfate. Ala-306 contacts sulfate. Val-344 provides a ligand contact to ATP. The tract at residues 407 to 527 (QGFAILIDNS…VNYLKDQGFY (121 aa)) is required for oligomerization; adenylyl-sulfate kinase-like.

The protein belongs to the sulfate adenylyltransferase family. Homohexamer. Dimer of trimers.

The protein resides in the cytoplasm. The catalysed reaction is sulfate + ATP + H(+) = adenosine 5'-phosphosulfate + diphosphate. The protein operates within sulfur metabolism; hydrogen sulfide biosynthesis; sulfite from sulfate: step 1/3. Catalyzes the first intracellular reaction of sulfate assimilation, forming adenosine-5'-phosphosulfate (APS) from inorganic sulfate and ATP. Plays an important role in sulfate activation as a component of the biosynthesis pathway of sulfur-containing amino acids. This Candida albicans (strain SC5314 / ATCC MYA-2876) (Yeast) protein is Sulfate adenylyltransferase.